The following is a 250-amino-acid chain: NH(3)-dependent NAD(+) synthetase (250 aa).

Position 30–37 (30–37 (GVSGGIDS)) interacts with ATP. Asp-36 lines the Mg(2+) pocket. Arg-117 contributes to the deamido-NAD(+) binding site. Thr-137 contacts ATP. Residue Glu-142 participates in Mg(2+) binding. Residues Lys-150 and Asp-157 each coordinate deamido-NAD(+). Lys-166 and Ser-188 together coordinate ATP. 234–235 (HK) contributes to the deamido-NAD(+) binding site.

The protein belongs to the NAD synthetase family. As to quaternary structure, homodimer.

The enzyme catalyses deamido-NAD(+) + NH4(+) + ATP = AMP + diphosphate + NAD(+) + H(+). It participates in cofactor biosynthesis; NAD(+) biosynthesis; NAD(+) from deamido-NAD(+) (ammonia route): step 1/1. In terms of biological role, catalyzes the ATP-dependent amidation of deamido-NAD to form NAD. Uses ammonia as a nitrogen source. The chain is NH(3)-dependent NAD(+) synthetase from Mannheimia succiniciproducens (strain KCTC 0769BP / MBEL55E).